A 503-amino-acid polypeptide reads, in one-letter code: Ribonuclease Y (503 aa).

A helical membrane pass occupies residues 2–22; it reads GIIIGLIIVSVALIISLCSLL. Residues 193–253 form the KH domain; that stretch reads TTNLVKLPND…IRREIATKTL (61 aa). The HD domain occupies 319-412; it reads VLLHSVEVAK…VAIADAISAS (94 aa).

The protein belongs to the RNase Y family.

The protein resides in the cell membrane. Endoribonuclease that initiates mRNA decay. The protein is Ribonuclease Y of Mesoplasma florum (strain ATCC 33453 / NBRC 100688 / NCTC 11704 / L1) (Acholeplasma florum).